We begin with the raw amino-acid sequence, 428 residues long: UDP-N-acetylglucosamine 1-carboxyvinyltransferase 2 (428 aa).

Lys-22–Asn-23 contributes to the phosphoenolpyruvate binding site. Arg-92 is a binding site for UDP-N-acetyl-alpha-D-glucosamine. Residue Cys-116 is the Proton donor of the active site. Cys-116 is subject to 2-(S-cysteinyl)pyruvic acid O-phosphothioketal. UDP-N-acetyl-alpha-D-glucosamine-binding positions include Arg-121 to Gln-125, Asp-304, and Ile-326.

This sequence belongs to the EPSP synthase family. MurA subfamily.

The protein resides in the cytoplasm. It catalyses the reaction phosphoenolpyruvate + UDP-N-acetyl-alpha-D-glucosamine = UDP-N-acetyl-3-O-(1-carboxyvinyl)-alpha-D-glucosamine + phosphate. It participates in cell wall biogenesis; peptidoglycan biosynthesis. In terms of biological role, cell wall formation. Adds enolpyruvyl to UDP-N-acetylglucosamine. This is UDP-N-acetylglucosamine 1-carboxyvinyltransferase 2 from Shouchella clausii (strain KSM-K16) (Alkalihalobacillus clausii).